Consider the following 229-residue polypeptide: Potassium/proton antiporter CemA (229 aa).

3 helical membrane passes run 7-27 (LTPF…SLSF), 106-126 (IVLH…YYFL), and 189-209 (IISG…KYWI).

This sequence belongs to the CemA family.

The protein resides in the plastid. Its subcellular location is the chloroplast inner membrane. It catalyses the reaction K(+)(in) + H(+)(out) = K(+)(out) + H(+)(in). Its function is as follows. Contributes to K(+)/H(+) antiport activity by supporting proton efflux to control proton extrusion and homeostasis in chloroplasts in a light-dependent manner to modulate photosynthesis. Prevents excessive induction of non-photochemical quenching (NPQ) under continuous-light conditions. Indirectly promotes efficient inorganic carbon uptake into chloroplasts. This Calycanthus floridus var. glaucus (Eastern sweetshrub) protein is Potassium/proton antiporter CemA.